Here is a 242-residue protein sequence, read N- to C-terminus: Murein peptide amidase A (242 aa).

Residues 1-234 (MTVTRPRAER…FAMANLLRWH (234 aa)) form the Peptidase M14 domain. The Zn(2+) site is built by His-49, Glu-52, and His-157. The active-site Proton donor/acceptor is the Glu-210.

It belongs to the peptidase M14 family. As to quaternary structure, homodimer. Zn(2+) serves as cofactor.

It localises to the cytoplasm. It carries out the reaction L-alanyl-gamma-D-glutamyl-meso-2,6-diaminopimelate + H2O = L-alanyl-D-glutamate + meso-2,6-diaminopimelate. It functions in the pathway cell wall degradation; peptidoglycan degradation. Involved in muropeptide degradation. Catalyzes the hydrolysis of the gamma-D-glutamyl-diaminopimelic acid (gamma-D-Glu-Dap) amide bond in the murein tripeptide L-alanyl-gamma-D-glutamyl-meso-diaminopimelic acid, leading to the formation of L-Ala-gamma-D-Glu and Dap. The sequence is that of Murein peptide amidase A from Escherichia coli O157:H7.